The chain runs to 1730 residues: Myosin-7 (1730 aa).

In terms of domain architecture, Myosin N-terminal SH3-like spans 8-56; sequence TVGSHVWVEDPDDAWIDGEVEEVNSEEITVNCSGKTVVAKLNNVYPKDP. The region spanning 61–731 is the Myosin motor domain; it reads LGVDDMTKLA…QMAEMDAHRA (671 aa). ATP-binding positions include 155 to 162 and 208 to 216; these read GESGAGKT and NNNSSRFGK. Actin-binding stretches follow at residues 494 to 528, 530 to 553, 588 to 612, and 612 to 634; these read LIEK…YQTF, NHKR…AGDV, FPPL…KQQL, and LQSL…KPNN. 4 IQ domains span residues 757-786, 782-811, 831-850, and 853-882; these read LQAA…EAAS, REAA…SACS, RRAT…HQRY, and TKKA…AAKE. Positions 883-1224 form a coiled coil; the sequence is TGALQDAKTK…VSDMETAEQI (342 aa). The 352-residue stretch at 1327–1678 folds into the Dilute domain; sequence DRIVPVFGSA…ISNLKLLLTN (352 aa). Disordered regions lie at residues 1367-1387 and 1456-1520; these read QSST…FGRM and DSSV…SSEE. Residues 1456–1465 are compositionally biased toward low complexity; it reads DSSVVNSPSK. Basic and acidic residues predominate over residues 1475–1508; sequence SSEENSPKKSSEENSPKESSGDKSPQKLSDDNSP.

The protein belongs to the TRAFAC class myosin-kinesin ATPase superfamily. Myosin family. Plant myosin class XI subfamily. As to quaternary structure, homodimer.

In terms of biological role, myosin heavy chain that is required for the cell cycle-regulated transport of various organelles and proteins for their segregation. Functions by binding with its tail domain to receptor proteins on organelles and exerting force with its N-terminal motor domain against actin filaments, thereby transporting its cargo along polarized actin cables. The protein is Myosin-7 (XI-A) of Arabidopsis thaliana (Mouse-ear cress).